Reading from the N-terminus, the 96-residue chain is Putative pterin-4-alpha-carbinolamine dehydratase (96 aa).

The protein belongs to the pterin-4-alpha-carbinolamine dehydratase family.

It carries out the reaction (4aS,6R)-4a-hydroxy-L-erythro-5,6,7,8-tetrahydrobiopterin = (6R)-L-erythro-6,7-dihydrobiopterin + H2O. This chain is Putative pterin-4-alpha-carbinolamine dehydratase, found in Synechocystis sp. (strain ATCC 27184 / PCC 6803 / Kazusa).